Reading from the N-terminus, the 341-residue chain is L-threonine 3-dehydrogenase (341 aa).

Cysteine 38 is a Zn(2+) binding site. Active-site charge relay system residues include threonine 40 and histidine 43. Histidine 63, glutamate 64, cysteine 93, cysteine 96, cysteine 99, and cysteine 107 together coordinate Zn(2+). NAD(+) is bound by residues isoleucine 175, aspartate 195, arginine 200, 262-264 (LGI), and 286-287 (IY).

Belongs to the zinc-containing alcohol dehydrogenase family. Homotetramer. The cofactor is Zn(2+).

It is found in the cytoplasm. The catalysed reaction is L-threonine + NAD(+) = (2S)-2-amino-3-oxobutanoate + NADH + H(+). The protein operates within amino-acid degradation; L-threonine degradation via oxydo-reductase pathway; glycine from L-threonine: step 1/2. Catalyzes the NAD(+)-dependent oxidation of L-threonine to 2-amino-3-ketobutyrate. The chain is L-threonine 3-dehydrogenase from Shewanella putrefaciens (strain CN-32 / ATCC BAA-453).